A 400-amino-acid chain; its full sequence is Acetate kinase (400 aa).

Mg(2+) is bound at residue asparagine 10. Lysine 17 lines the ATP pocket. Arginine 91 contacts substrate. Aspartate 150 serves as the catalytic Proton donor/acceptor. Residues 210–214, 285–287, and 333–337 each bind ATP; these read HLGNG, DCR, and GIGEN. Residue glutamate 387 participates in Mg(2+) binding.

Belongs to the acetokinase family. As to quaternary structure, homodimer. It depends on Mg(2+) as a cofactor. The cofactor is Mn(2+).

The protein resides in the cytoplasm. The catalysed reaction is acetate + ATP = acetyl phosphate + ADP. It participates in metabolic intermediate biosynthesis; acetyl-CoA biosynthesis; acetyl-CoA from acetate: step 1/2. In terms of biological role, catalyzes the formation of acetyl phosphate from acetate and ATP. Can also catalyze the reverse reaction. The sequence is that of Acetate kinase from Yersinia pseudotuberculosis serotype IB (strain PB1/+).